The chain runs to 353 residues: Protein-glutamate methylesterase/protein-glutamine glutaminase 4 (353 aa).

Residues 7 to 124 (RILVAEDSPT…SPDFDADSRR (118 aa)) enclose the Response regulatory domain. Aspartate 58 carries the 4-aspartylphosphate modification. One can recognise a CheB-type methylesterase domain in the interval 158–350 (PVSPTRPGVV…SRLTSAFRGS (193 aa)). Residues serine 172, histidine 199, and aspartate 292 contribute to the active site.

It belongs to the CheB family. Phosphorylated by CheA. Phosphorylation of the N-terminal regulatory domain activates the methylesterase activity.

Its subcellular location is the cytoplasm. It carries out the reaction [protein]-L-glutamate 5-O-methyl ester + H2O = L-glutamyl-[protein] + methanol + H(+). It catalyses the reaction L-glutaminyl-[protein] + H2O = L-glutamyl-[protein] + NH4(+). Involved in chemotaxis. Part of a chemotaxis signal transduction system that modulates chemotaxis in response to various stimuli. Catalyzes the demethylation of specific methylglutamate residues introduced into the chemoreceptors (methyl-accepting chemotaxis proteins or MCP) by CheR. Also mediates the irreversible deamidation of specific glutamine residues to glutamic acid. This Myxococcus xanthus (strain DK1622) protein is Protein-glutamate methylesterase/protein-glutamine glutaminase 4.